The primary structure comprises 122 residues: Large ribosomal subunit protein uL14 (122 aa).

The protein belongs to the universal ribosomal protein uL14 family. In terms of assembly, part of the 50S ribosomal subunit. Forms a cluster with proteins L3 and L19. In the 70S ribosome, L14 and L19 interact and together make contacts with the 16S rRNA in bridges B5 and B8.

Its function is as follows. Binds to 23S rRNA. Forms part of two intersubunit bridges in the 70S ribosome. This chain is Large ribosomal subunit protein uL14, found in Trichormus variabilis (strain ATCC 29413 / PCC 7937) (Anabaena variabilis).